The sequence spans 144 residues: Large ribosomal subunit protein uL15 (144 aa).

Residues 1–53 (MYLNTLAPAEGAKHSAKRLGRGIGSGLGKTGGRGHKGQKSRTGGGVRRGFEGG) form a disordered region. A compositionally biased stretch (gly residues) spans 21 to 31 (RGIGSGLGKTG).

This sequence belongs to the universal ribosomal protein uL15 family. As to quaternary structure, part of the 50S ribosomal subunit.

Functionally, binds to the 23S rRNA. The protein is Large ribosomal subunit protein uL15 of Mannheimia succiniciproducens (strain KCTC 0769BP / MBEL55E).